The chain runs to 81 residues: Small ribosomal subunit protein bS16 (81 aa).

It belongs to the bacterial ribosomal protein bS16 family.

This Teredinibacter turnerae (strain ATCC 39867 / T7901) protein is Small ribosomal subunit protein bS16.